The following is a 140-amino-acid chain: Large ribosomal subunit protein bL17 (140 aa).

The protein belongs to the bacterial ribosomal protein bL17 family. In terms of assembly, part of the 50S ribosomal subunit. Contacts protein L32.

The sequence is that of Large ribosomal subunit protein bL17 from Methylobacterium nodulans (strain LMG 21967 / CNCM I-2342 / ORS 2060).